The primary structure comprises 170 residues: Peptide deformylase (170 aa).

Residues Cys91 and His133 each coordinate Fe cation. Residue Glu134 is part of the active site. His137 provides a ligand contact to Fe cation.

It belongs to the polypeptide deformylase family. The cofactor is Fe(2+).

It carries out the reaction N-terminal N-formyl-L-methionyl-[peptide] + H2O = N-terminal L-methionyl-[peptide] + formate. Functionally, removes the formyl group from the N-terminal Met of newly synthesized proteins. Requires at least a dipeptide for an efficient rate of reaction. N-terminal L-methionine is a prerequisite for activity but the enzyme has broad specificity at other positions. This chain is Peptide deformylase, found in Aliivibrio fischeri (strain ATCC 700601 / ES114) (Vibrio fischeri).